A 421-amino-acid polypeptide reads, in one-letter code: U-box domain-containing protein 26 (421 aa).

Residues 13–87 (QIPYHFRCPI…QEWCVANRSN (75 aa)) enclose the U-box domain.

It catalyses the reaction S-ubiquitinyl-[E2 ubiquitin-conjugating enzyme]-L-cysteine + [acceptor protein]-L-lysine = [E2 ubiquitin-conjugating enzyme]-L-cysteine + N(6)-ubiquitinyl-[acceptor protein]-L-lysine.. It participates in protein modification; protein ubiquitination. Its function is as follows. Functions as an E3 ubiquitin ligase. The protein is U-box domain-containing protein 26 (PUB26) of Arabidopsis thaliana (Mouse-ear cress).